The chain runs to 383 residues: uncharacterized protein (383 aa).

The protein belongs to the peptidase M20 family.

This is an uncharacterized protein from Staphylococcus haemolyticus (strain JCSC1435).